The primary structure comprises 3380 residues: Apolipophorins (3380 aa).

An N-terminal signal peptide occupies residues 1 to 21 (MGTPPHIWFLLILAISSGGLS). The region spanning 40–646 (YQKGQTYTYS…SQSSYLPRSV (607 aa)) is the Vitellogenin domain. Residues Asn132, Asn649, Asn969, Asn2174, Asn2851, and Asn3177 are each glycosylated (N-linked (GlcNAc...) asparagine). A VWFD domain is found at 2815–2979 (ATAILLNSHH…NAWKVDAQCA (165 aa)). Cys2839 and Cys2978 are disulfide-bonded.

Post-translationally, cleaved into 2 chains by furin protease. However, prevention of cleavage does not impair its function. In terms of processing, N-glycosylated. In terms of tissue distribution, present in brain, hemolymph, fat body and eyes.

It localises to the secreted. Functionally, constitutes the major component of lipophorin, which mediates transport for various types of lipids in hemolymph. Acts by forming lipoprotein particles that bind lipoproteins and lipids. May be required for morphogens wingless (wg) and hedgehog (hh) function, possibly by acting as vehicles for the movement of wg and hh. This chain is Apolipophorins, found in Locusta migratoria (Migratory locust).